A 286-amino-acid polypeptide reads, in one-letter code: Undecaprenyl-diphosphatase (286 aa).

8 helical membrane-spanning segments follow: residues 17 to 37, 49 to 69, 98 to 118, 126 to 146, 159 to 179, 204 to 224, 232 to 252, and 261 to 281; these read VVLG…TAHL, PGVA…IGYF, IAIA…KLFW, LRSV…LALA, VQGL…IPGV, FLLG…GAFA, LPML…IAWL, and TWPF…LVLA.

Belongs to the UppP family.

The protein localises to the cell inner membrane. It carries out the reaction di-trans,octa-cis-undecaprenyl diphosphate + H2O = di-trans,octa-cis-undecaprenyl phosphate + phosphate + H(+). Its function is as follows. Catalyzes the dephosphorylation of undecaprenyl diphosphate (UPP). Confers resistance to bacitracin. The sequence is that of Undecaprenyl-diphosphatase from Synechococcus sp. (strain RCC307).